The chain runs to 441 residues: tRNA modification GTPase MnmE (441 aa).

Arg23, Glu81, and Lys121 together coordinate (6S)-5-formyl-5,6,7,8-tetrahydrofolate. The region spanning 218 to 363 (GFRVAIVGPP…LESWIAAFVS (146 aa)) is the TrmE-type G domain. A K(+)-binding site is contributed by Asn228. GTP contacts are provided by residues 228–233 (NAGKSS), 247–253 (TDIAGTT), 272–275 (DTAG), and 326–329 (NKAD). Ser232 is a binding site for Mg(2+). Residues Thr247, Ile249, and Thr252 each coordinate K(+). Mg(2+) is bound at residue Thr253. Lys441 lines the (6S)-5-formyl-5,6,7,8-tetrahydrofolate pocket.

Belongs to the TRAFAC class TrmE-Era-EngA-EngB-Septin-like GTPase superfamily. TrmE GTPase family. As to quaternary structure, homodimer. Heterotetramer of two MnmE and two MnmG subunits. K(+) is required as a cofactor.

It localises to the cytoplasm. In terms of biological role, exhibits a very high intrinsic GTPase hydrolysis rate. Involved in the addition of a carboxymethylaminomethyl (cmnm) group at the wobble position (U34) of certain tRNAs, forming tRNA-cmnm(5)s(2)U34. In Hyphomonas neptunium (strain ATCC 15444), this protein is tRNA modification GTPase MnmE.